The following is a 938-amino-acid chain: Isoleucine--tRNA ligase (938 aa).

A 'HIGH' region motif is present at residues 58–68 (PYANGSIHIGH). Position 183 is an N6-acetyllysine (Lys183). Position 561 (Glu561) interacts with L-isoleucyl-5'-AMP. Positions 602-606 (KMSKS) match the 'KMSKS' region motif. Lys605 is a binding site for ATP. Positions 901, 904, 921, and 924 each coordinate Zn(2+).

Belongs to the class-I aminoacyl-tRNA synthetase family. IleS type 1 subfamily. In terms of assembly, monomer. Zn(2+) serves as cofactor.

It is found in the cytoplasm. The catalysed reaction is tRNA(Ile) + L-isoleucine + ATP = L-isoleucyl-tRNA(Ile) + AMP + diphosphate. Its function is as follows. Catalyzes the attachment of isoleucine to tRNA(Ile). As IleRS can inadvertently accommodate and process structurally similar amino acids such as valine, to avoid such errors it has two additional distinct tRNA(Ile)-dependent editing activities. One activity is designated as 'pretransfer' editing and involves the hydrolysis of activated Val-AMP. The other activity is designated 'posttransfer' editing and involves deacylation of mischarged Val-tRNA(Ile). This is Isoleucine--tRNA ligase from Shigella boydii serotype 4 (strain Sb227).